Consider the following 865-residue polypeptide: Protein translocase subunit SecA (865 aa).

ATP contacts are provided by residues Q93, 111 to 115 (GEGKT), and D501. Zn(2+) contacts are provided by C841, C843, C852, and C853.

It belongs to the SecA family. As to quaternary structure, monomer and homodimer. Part of the essential Sec protein translocation apparatus which comprises SecA, SecYEG and auxiliary proteins SecDF-YajC and YidC. The cofactor is Zn(2+).

Its subcellular location is the cell inner membrane. The protein resides in the cytoplasm. It carries out the reaction ATP + H2O + cellular proteinSide 1 = ADP + phosphate + cellular proteinSide 2.. In terms of biological role, part of the Sec protein translocase complex. Interacts with the SecYEG preprotein conducting channel. Has a central role in coupling the hydrolysis of ATP to the transfer of proteins into and across the cell membrane, serving as an ATP-driven molecular motor driving the stepwise translocation of polypeptide chains across the membrane. The protein is Protein translocase subunit SecA of Helicobacter pylori (strain P12).